Here is a 123-residue protein sequence, read N- to C-terminus: N(4)-acetylcytidine amidohydrolase (123 aa).

The 96-residue stretch at 6-101 (ITFYQRFEAD…EIIFWVIQFS (96 aa)) folds into the ASCH domain. Lysine 21 serves as the catalytic Proton acceptor. The Nucleophile role is filled by serine 24. Glutamate 74 serves as the catalytic Proton donor.

It belongs to the N(4)-acetylcytidine amidohydrolase family.

It carries out the reaction N(4)-acetylcytidine + H2O = cytidine + acetate + H(+). The catalysed reaction is N(4)-acetyl-2'-deoxycytidine + H2O = 2'-deoxycytidine + acetate + H(+). It catalyses the reaction N(4)-acetylcytosine + H2O = cytosine + acetate + H(+). Its function is as follows. Catalyzes the hydrolysis of N(4)-acetylcytidine (ac4C). The polypeptide is N(4)-acetylcytidine amidohydrolase (Haemophilus influenzae (strain ATCC 51907 / DSM 11121 / KW20 / Rd)).